The chain runs to 659 residues: A-type ATP synthase subunit I (659 aa).

8 helical membrane-spanning segments follow: residues 376–396 (FFFG…IISA), 415–435 (IMLW…SYCG), 460–480 (MIAL…GFIV), 489–509 (GAIF…LFAL), 518–538 (LIVK…EVLA), 542–562 (MAVL…LSYA), 568–588 (ALAT…IWGI), and 590–610 (IASV…GHIF).

This sequence belongs to the V-ATPase 116 kDa subunit family. Has multiple subunits with at least A(3), B(3), C, D, E, F, H, I and proteolipid K(x).

It localises to the cell membrane. Its function is as follows. Component of the A-type ATP synthase that produces ATP from ADP in the presence of a proton gradient across the membrane. This chain is A-type ATP synthase subunit I, found in Pyrococcus horikoshii (strain ATCC 700860 / DSM 12428 / JCM 9974 / NBRC 100139 / OT-3).